The primary structure comprises 355 residues: Chorismate synthase (355 aa).

Arginine 48 lines the NADP(+) pocket. FMN-binding positions include 125 to 127 (RSS), 239 to 240 (NA), glycine 280, 295 to 299 (KPVAT), and arginine 321.

This sequence belongs to the chorismate synthase family. In terms of assembly, homotetramer. Requires FMNH2 as cofactor.

The catalysed reaction is 5-O-(1-carboxyvinyl)-3-phosphoshikimate = chorismate + phosphate. The protein operates within metabolic intermediate biosynthesis; chorismate biosynthesis; chorismate from D-erythrose 4-phosphate and phosphoenolpyruvate: step 7/7. Its function is as follows. Catalyzes the anti-1,4-elimination of the C-3 phosphate and the C-6 proR hydrogen from 5-enolpyruvylshikimate-3-phosphate (EPSP) to yield chorismate, which is the branch point compound that serves as the starting substrate for the three terminal pathways of aromatic amino acid biosynthesis. This reaction introduces a second double bond into the aromatic ring system. The sequence is that of Chorismate synthase from Flavobacterium psychrophilum (strain ATCC 49511 / DSM 21280 / CIP 103535 / JIP02/86).